The sequence spans 340 residues: Inactive hyaluronidase B (340 aa).

Disulfide bonds link Cys-21/Cys-310 and Cys-187/Cys-199. N-linked (GlcNAc...) asparagine glycans are attached at residues Asn-66 and Asn-81.

The protein belongs to the glycosyl hydrolase 56 family. N-glycosylated on at least two Asn residues by identical heptasaccharide units composed of Man, GlcNAc, and Fuc residues in the molar ration of 3:2:2. Expressed by the venom gland.

It localises to the secreted. Has no hyaluronidase activity. The sequence is that of Inactive hyaluronidase B from Vespula vulgaris (Yellow jacket).